A 438-amino-acid polypeptide reads, in one-letter code: Adenylosuccinate synthetase (438 aa).

GTP is bound by residues Gly-13–Lys-19 and Gly-41–Thr-43. Residue Asp-14 is the Proton acceptor of the active site. Mg(2+) is bound by residues Asp-14 and Gly-41. IMP contacts are provided by residues Asp-14–Lys-17, Asn-39–His-42, Thr-130, Arg-144, Gln-225, Thr-240, and Arg-312. Catalysis depends on His-42, which acts as the Proton donor. Residue Ala-308–Arg-314 coordinates substrate. GTP-binding positions include Arg-314, Lys-340 to Asp-342, and Ser-422 to Gly-424.

This sequence belongs to the adenylosuccinate synthetase family. As to quaternary structure, homodimer. It depends on Mg(2+) as a cofactor.

It localises to the cytoplasm. It catalyses the reaction IMP + L-aspartate + GTP = N(6)-(1,2-dicarboxyethyl)-AMP + GDP + phosphate + 2 H(+). The protein operates within purine metabolism; AMP biosynthesis via de novo pathway; AMP from IMP: step 1/2. Plays an important role in the de novo pathway of purine nucleotide biosynthesis. Catalyzes the first committed step in the biosynthesis of AMP from IMP. The chain is Adenylosuccinate synthetase from Vesicomyosocius okutanii subsp. Calyptogena okutanii (strain HA).